Reading from the N-terminus, the 117-residue chain is MAYSKLGRTSSQRKALLRDLATDLIINERIQTTEQKAKELRPVVEKLITLGKRGDLHARRQVASFVRKENAGEKDAIQKLFEDVAPRYAERQGGYTRIMKVGPRRGDGAEVVIIELV.

The protein belongs to the bacterial ribosomal protein bL17 family. As to quaternary structure, part of the 50S ribosomal subunit. Contacts protein L32.

The protein is Large ribosomal subunit protein bL17 of Exiguobacterium sp. (strain ATCC BAA-1283 / AT1b).